The following is a 117-amino-acid chain: Immunoglobulin heavy variable 3-7 (117 aa).

Positions 1–19 (MELGLSWVFLVAILEGVQC) are cleaved as a signal peptide. Residues 20-44 (EVQLVESGGGLVQPGGSLRLSCAAS) are framework-1. The 98-residue stretch at 20-117 (EVQLVESGGG…EDTAVYYCAR (98 aa)) folds into the Ig-like domain. Cys41 and Cys115 form a disulfide bridge. The complementarity-determining-1 stretch occupies residues 45 to 52 (GFTFSSYW). The tract at residues 53-69 (MSWVRQAPGKGLEWVAN) is framework-2. Residues 70-77 (IKQDGSEK) are complementarity-determining-2. The tract at residues 78–115 (YYVDSVKGRFTISRDNAKNSLYLQMNSLRAEDTAVYYC) is framework-3. Positions 116–117 (AR) are complementarity-determining-3.

As to quaternary structure, immunoglobulins are composed of two identical heavy chains and two identical light chains; disulfide-linked.

It localises to the secreted. The protein resides in the cell membrane. Functionally, v region of the variable domain of immunoglobulin heavy chains that participates in the antigen recognition. Immunoglobulins, also known as antibodies, are membrane-bound or secreted glycoproteins produced by B lymphocytes. In the recognition phase of humoral immunity, the membrane-bound immunoglobulins serve as receptors which, upon binding of a specific antigen, trigger the clonal expansion and differentiation of B lymphocytes into immunoglobulins-secreting plasma cells. Secreted immunoglobulins mediate the effector phase of humoral immunity, which results in the elimination of bound antigens. The antigen binding site is formed by the variable domain of one heavy chain, together with that of its associated light chain. Thus, each immunoglobulin has two antigen binding sites with remarkable affinity for a particular antigen. The variable domains are assembled by a process called V-(D)-J rearrangement and can then be subjected to somatic hypermutations which, after exposure to antigen and selection, allow affinity maturation for a particular antigen. This Homo sapiens (Human) protein is Immunoglobulin heavy variable 3-7.